The following is a 229-amino-acid chain: Protein AF_2251 (229 aa).

The protein belongs to the CinA family.

The chain is Protein AF_2251 from Archaeoglobus fulgidus (strain ATCC 49558 / DSM 4304 / JCM 9628 / NBRC 100126 / VC-16).